The following is a 453-amino-acid chain: Bifunctional protein GlmU (453 aa).

The interval 1 to 227 (MNKLSVVILA…LMEVEGVNNR (227 aa)) is pyrophosphorylase. Residues 9–12 (LAAG), K23, Q74, 79–80 (GT), 101–103 (YGD), G138, E152, N167, and N225 each bind UDP-N-acetyl-alpha-D-glucosamine. Residue D103 participates in Mg(2+) binding. N225 lines the Mg(2+) pocket. The linker stretch occupies residues 228–248 (LQLANLERHFQRKQVEKLLLA). Residues 249–453 (GVTFADPARF…ISNWQRPKRK (205 aa)) are N-acetyltransferase. UDP-N-acetyl-alpha-D-glucosamine-binding residues include R331 and K349. The Proton acceptor role is filled by H361. The UDP-N-acetyl-alpha-D-glucosamine site is built by Y364 and N375. Residues A378, 384 to 385 (NY), S403, A421, and R438 contribute to the acetyl-CoA site.

This sequence in the N-terminal section; belongs to the N-acetylglucosamine-1-phosphate uridyltransferase family. It in the C-terminal section; belongs to the transferase hexapeptide repeat family. As to quaternary structure, homotrimer. Requires Mg(2+) as cofactor.

It localises to the cytoplasm. It carries out the reaction alpha-D-glucosamine 1-phosphate + acetyl-CoA = N-acetyl-alpha-D-glucosamine 1-phosphate + CoA + H(+). The catalysed reaction is N-acetyl-alpha-D-glucosamine 1-phosphate + UTP + H(+) = UDP-N-acetyl-alpha-D-glucosamine + diphosphate. It participates in nucleotide-sugar biosynthesis; UDP-N-acetyl-alpha-D-glucosamine biosynthesis; N-acetyl-alpha-D-glucosamine 1-phosphate from alpha-D-glucosamine 6-phosphate (route II): step 2/2. It functions in the pathway nucleotide-sugar biosynthesis; UDP-N-acetyl-alpha-D-glucosamine biosynthesis; UDP-N-acetyl-alpha-D-glucosamine from N-acetyl-alpha-D-glucosamine 1-phosphate: step 1/1. The protein operates within bacterial outer membrane biogenesis; LPS lipid A biosynthesis. Functionally, catalyzes the last two sequential reactions in the de novo biosynthetic pathway for UDP-N-acetylglucosamine (UDP-GlcNAc). The C-terminal domain catalyzes the transfer of acetyl group from acetyl coenzyme A to glucosamine-1-phosphate (GlcN-1-P) to produce N-acetylglucosamine-1-phosphate (GlcNAc-1-P), which is converted into UDP-GlcNAc by the transfer of uridine 5-monophosphate (from uridine 5-triphosphate), a reaction catalyzed by the N-terminal domain. In Histophilus somni (strain 129Pt) (Haemophilus somnus), this protein is Bifunctional protein GlmU.